We begin with the raw amino-acid sequence, 170 residues long: Adenine phosphoribosyltransferase (170 aa).

Belongs to the purine/pyrimidine phosphoribosyltransferase family. Homodimer.

The protein resides in the cytoplasm. The catalysed reaction is AMP + diphosphate = 5-phospho-alpha-D-ribose 1-diphosphate + adenine. It participates in purine metabolism; AMP biosynthesis via salvage pathway; AMP from adenine: step 1/1. Its function is as follows. Catalyzes a salvage reaction resulting in the formation of AMP, that is energically less costly than de novo synthesis. The sequence is that of Adenine phosphoribosyltransferase from Halothermothrix orenii (strain H 168 / OCM 544 / DSM 9562).